Here is a 22-residue protein sequence, read N- to C-terminus: Putative lactoylglutathione lyase (22 aa).

Positions 1–22 (ITACLDPDGWKEPGPLPGISTK) are disordered. Catalysis depends on Glu-12, which acts as the Proton donor/acceptor.

This sequence belongs to the glyoxalase I family. Zn(2+) is required as a cofactor.

The catalysed reaction is (R)-S-lactoylglutathione = methylglyoxal + glutathione. The protein operates within secondary metabolite metabolism; methylglyoxal degradation; (R)-lactate from methylglyoxal: step 1/2. Functionally, catalyzes the conversion of hemimercaptal, formed from methylglyoxal and glutathione, to S-lactoylglutathione. The polypeptide is Putative lactoylglutathione lyase (Pinus strobus (Eastern white pine)).